Here is a 617-residue protein sequence, read N- to C-terminus: E3 ubiquitin-protein ligase ORTHRUS 1 (617 aa).

A PHD-type zinc finger spans residues 12-62; sequence DGVCMRCQVNPPSEETLTCGTCVTPWHVPCLLPESLASSTGEWECPDCSGV. The RING-type 1 zinc finger occupies 129-169; sequence CSICIQLPERPITTPCGHNFCLKCFEKWAVGQGKLTCMICR. One can recognise a YDG domain in the interval 258-407; sequence TRKQGVLVGE…FKVCRYLFVR (150 aa). Residues 495–552 form an RING-type 2 zinc finger; that stretch reads CQICREVLSLPVTTPCAHNFCKACLEAKFAGITQLRERSNGGRKLRAKKNIMTCPCCT. Residues 563-593 are a coiled coil; sequence QVNREMMEIIENFKKSEEEADASISEEEEEE. The interval 575 to 617 is disordered; that stretch reads FKKSEEEADASISEEEEEESEPPTKKIKMDNNSVGGSGTSLSA. Acidic residues predominate over residues 580–595; sequence EEADASISEEEEEESE. The span at 604 to 617 shows a compositional bias: polar residues; the sequence is DNNSVGGSGTSLSA.

In terms of tissue distribution, expressed in inflorescences and leaves.

It is found in the nucleus. The enzyme catalyses S-ubiquitinyl-[E2 ubiquitin-conjugating enzyme]-L-cysteine + [acceptor protein]-L-lysine = [E2 ubiquitin-conjugating enzyme]-L-cysteine + N(6)-ubiquitinyl-[acceptor protein]-L-lysine.. It functions in the pathway protein modification; protein ubiquitination. Its function is as follows. E3 ubiquitin-protein ligase. Participates in CpG methylation-dependent transcriptional regulation and epigenetic transcriptional silencing. Mediates ubiquitination with the E2 ubiquitin-conjugating enzymes UBC11, UBC8 and UBC8 homologs (e.g. UBC10, UBC11, UBC28 and UBC29) but not with UBC27, UBC30, UBC32, UBC34 and UBC36. Promotes methylation-mediated gene silencing leading, for example, to early flowering. Can bind to CpG, CpNpG, and CpNpN DNA motifs, with a strong preference for methylated forms, and with highest affinity for CpG substrate. This Arabidopsis thaliana (Mouse-ear cress) protein is E3 ubiquitin-protein ligase ORTHRUS 1 (ORTH1).